Consider the following 82-residue polypeptide: MNDITAAASVIAAALAVGLAAIGPGIGQGNAASKAAEGIARQPEAEGKIRGTLLLSLAFMESLTIYGLLVSIVLLFANPFRG.

2 consecutive transmembrane segments (helical) span residues 6-26 (AAASVIAAALAVGLAAIGPGI) and 57-77 (LAFMESLTIYGLLVSIVLLFA).

It belongs to the ATPase C chain family. In terms of assembly, F-type ATPases have 2 components, F(1) - the catalytic core - and F(0) - the membrane proton channel. F(1) has five subunits: alpha(3), beta(3), gamma(1), delta(1), epsilon(1). F(0) has four main subunits: a(1), b(1), b'(1) and c(10-14). The alpha and beta chains form an alternating ring which encloses part of the gamma chain. F(1) is attached to F(0) by a central stalk formed by the gamma and epsilon chains, while a peripheral stalk is formed by the delta, b and b' chains.

The protein resides in the cell inner membrane. Its function is as follows. F(1)F(0) ATP synthase produces ATP from ADP in the presence of a proton or sodium gradient. F-type ATPases consist of two structural domains, F(1) containing the extramembraneous catalytic core and F(0) containing the membrane proton channel, linked together by a central stalk and a peripheral stalk. During catalysis, ATP synthesis in the catalytic domain of F(1) is coupled via a rotary mechanism of the central stalk subunits to proton translocation. In terms of biological role, key component of the F(0) channel; it plays a direct role in translocation across the membrane. A homomeric c-ring of between 10-14 subunits forms the central stalk rotor element with the F(1) delta and epsilon subunits. The chain is ATP synthase subunit c from Gloeobacter violaceus (strain ATCC 29082 / PCC 7421).